Here is a 588-residue protein sequence, read N- to C-terminus: L-fucose isomerase (588 aa).

Residues Glu335 and Asp359 each act as proton acceptor in the active site. 3 residues coordinate Mn(2+): Glu335, Asp359, and His525.

It belongs to the L-fucose isomerase family. The cofactor is Mn(2+).

The protein resides in the cytoplasm. The catalysed reaction is L-fucose = L-fuculose. Its pathway is carbohydrate degradation; L-fucose degradation; L-lactaldehyde and glycerone phosphate from L-fucose: step 1/3. In terms of biological role, converts the aldose L-fucose into the corresponding ketose L-fuculose. In Streptococcus pneumoniae (strain P1031), this protein is L-fucose isomerase.